The following is a 362-amino-acid chain: Epoxyqueuosine reductase (362 aa).

The active-site Proton donor is Asp-143. A 4Fe-4S ferredoxin-type domain is found at 191 to 220; it reads PDSPKHQDSCGKCQACIKLCPTGAIQPGKM. Residues Cys-200, Cys-203, Cys-206, Cys-210, Cys-226, Cys-253, Cys-256, and Cys-260 each coordinate [4Fe-4S] cluster.

Belongs to the QueG family. In terms of assembly, monomer. Requires cob(II)alamin as cofactor. It depends on [4Fe-4S] cluster as a cofactor.

The protein resides in the cytoplasm. It carries out the reaction epoxyqueuosine(34) in tRNA + AH2 = queuosine(34) in tRNA + A + H2O. It participates in tRNA modification; tRNA-queuosine biosynthesis. Its function is as follows. Catalyzes the conversion of epoxyqueuosine (oQ) to queuosine (Q), which is a hypermodified base found in the wobble positions of tRNA(Asp), tRNA(Asn), tRNA(His) and tRNA(Tyr). The protein is Epoxyqueuosine reductase of Francisella cf. novicida (strain Fx1).